Here is a 276-residue protein sequence, read N- to C-terminus: MAAETRNVAGAEAPPPQKRYYRQRAHSNPMADHTLRYPVKPEEMDWSELYPEFFAPLTQNQSHDDPKDKKEKRAQAQVEFADIGCGYGGLLVELSPLFPDTLILGLEIRVKVSDYVQDRIRALRAAPAGGFQNIACLRSNAMKHLPNFFYKGQLTKMFFLFPDPHFKRTKHKWRIISPTLLAEYAYVLRVGGLVYTITDVLELHDWMCTHFEEHPLFERVPLEDLSEDPVVGHLGTSTEEGKKVLRNGGKNFPAIFRRIQDPVLQAVTSQTSLPGH.

The disordered stretch occupies residues 1-36; it reads MAAETRNVAGAEAPPPQKRYYRQRAHSNPMADHTLR. Ala-2 is modified (N-acetylalanine). Residue Ser-27 is modified to Phosphoserine; by PKB/AKT1 and RPS6KA3. Residues Gly-84, Glu-107, Ile-108, Arg-109, Asn-140, Ala-141, and Leu-160 each contribute to the S-adenosyl-L-homocysteine site. Positions 84 and 107 each coordinate S-adenosyl-L-methionine. The S-adenosyl-L-methionine site is built by Arg-109, Asn-140, Ala-141, and Leu-160. Residue Asp-163 is part of the active site. The segment at 164-172 is alphaC helix; the sequence is PHFKRTKHK. Residues Thr-238 and Glu-240 each contribute to the S-adenosyl-L-homocysteine site. S-adenosyl-L-methionine-binding residues include Thr-238 and Glu-240. The tract at residues 238–246 is alpha6 helix; sequence TEEGKKVLR.

The protein belongs to the class I-like SAM-binding methyltransferase superfamily. TrmB family. In terms of assembly, catalytic component of the METTL1-WDR4 complex, composed of METTL1 and WDR4. Post-translationally, phosphorylation at Ser-27 by PKB/AKT1 inactivates its methyltransferase activity via a steric interference mechanism in the active site that locally disrupts the catalytic center. Phosphorylation at Ser-27 does not affect the interaction with WDR4. Ubiquitous.

It is found in the nucleus. The catalysed reaction is guanosine(46) in tRNA + S-adenosyl-L-methionine = N(7)-methylguanosine(46) in tRNA + S-adenosyl-L-homocysteine. It carries out the reaction a guanosine in mRNA + S-adenosyl-L-methionine = an N(7)-methylguanosine in mRNA + S-adenosyl-L-homocysteine. It catalyses the reaction a guanosine in miRNA + S-adenosyl-L-methionine = an N(7)-methylguanosine in miRNA + S-adenosyl-L-homocysteine. Its pathway is tRNA modification; N(7)-methylguanine-tRNA biosynthesis. Catalytic component of METTL1-WDR4 methyltransferase complex that mediates the formation of N(7)-methylguanine in a subset of RNA species, such as tRNAs, mRNAs and microRNAs (miRNAs). Catalyzes the formation of N(7)-methylguanine at position 46 (m7G46) in a large subset of tRNAs that contain the 5'-RAGGU-3' motif within the variable loop. M7G46 interacts with C13-G22 in the D-loop to stabilize tRNA tertiary structure and protect tRNAs from decay. Also acts as a methyltransferase for a subset of internal N(7)-methylguanine in mRNAs. Internal N(7)-methylguanine methylation of mRNAs in response to stress promotes their relocalization to stress granules, thereby suppressing their translation. Also methylates a specific subset of miRNAs, such as let-7. N(7)-methylguanine methylation of let-7 miRNA promotes let-7 miRNA processing by disrupting an inhibitory secondary structure within the primary miRNA transcript (pri-miRNA). Acts as a regulator of embryonic stem cell self-renewal and differentiation. This Homo sapiens (Human) protein is tRNA (guanine-N(7)-)-methyltransferase.